The primary structure comprises 758 residues: 5-methyltetrahydropteroyltriglutamate--homocysteine methyltransferase (758 aa).

Residues 16-19 and Lys-116 each bind 5-methyltetrahydropteroyltri-L-glutamate; that span reads RELK. L-homocysteine contacts are provided by residues 436–438 and Glu-489; that span reads IGS. L-methionine is bound by residues 436 to 438 and Glu-489; that span reads IGS. 5-methyltetrahydropteroyltri-L-glutamate-binding positions include 520-521 and Trp-566; that span reads RC. Residue Asp-604 participates in L-homocysteine binding. Asp-604 is an L-methionine binding site. Position 610 (Glu-610) interacts with 5-methyltetrahydropteroyltri-L-glutamate. Zn(2+) is bound by residues His-646, Cys-648, and Glu-670. His-699 functions as the Proton donor in the catalytic mechanism. Residue Cys-731 participates in Zn(2+) binding.

The protein belongs to the vitamin-B12 independent methionine synthase family. Zn(2+) serves as cofactor.

The enzyme catalyses 5-methyltetrahydropteroyltri-L-glutamate + L-homocysteine = tetrahydropteroyltri-L-glutamate + L-methionine. The protein operates within amino-acid biosynthesis; L-methionine biosynthesis via de novo pathway; L-methionine from L-homocysteine (MetE route): step 1/1. Its function is as follows. Catalyzes the transfer of a methyl group from 5-methyltetrahydrofolate to homocysteine resulting in methionine formation. The sequence is that of 5-methyltetrahydropteroyltriglutamate--homocysteine methyltransferase from Xylella fastidiosa (strain M12).